Consider the following 729-residue polypeptide: MNPFQQNESKETLFSPVSTEETPPRLSSPAKKTPPKICGSNYPLSIAFIVVNEFCERFSYYGMKAVLTLYFLYFLHWNEDTSTSVYHAFSSLCYFTPILGAAIADSWLGKFKTIIYLSLVNVLGHVIKSLSAFPILGGKVVHTVLSLVGLCLIALGTGGIKPCVAAFGGDQFEEKHAEERTRYFSGFYLAINAGSLISTFITPMLRGDVQCFGEDCYALAFGVPGLLMVIALVVFAMGSKMYKKPPPEGNIVAQVVKCIWFAISNRFKNRSEDIPKRQHWLDWAAEKYPKQLIMDVKTLTRVLFLYIPLPMFWALLDQQGSRWTLQATKMNGNLGFFVLQPDQMQVLNPLLVLIFIPLFDLVIYRLISKCGINFTSLRKMAVGMVLACLAFAAAATVEIKINEMAPPQPGSQEILLQVLNLADDEVKLTVLGNNNNSLLADSIKSFQKTPHYSKIHLNTKSQDFYFHLKYHNLSIYTEHSVEERNWYSLIIREDGKSISSIMVKDMENETTYGMTAIRFINTLQENVNISLGTDISLNVGENYGVSAYRTVQRGEYPAVHCKTEDKDFSLNLGLLDFGASYLFVITNSTKQGLQAWKMEDIPANKVSIAWQLPQYALVTAGEVMFSVTGLEFSYSQAPSSMKSVLQAAWLLTVAIGNIIVLVVAQFSGLVQWAEFVLFSCLLLVVCLIFSIMGYYYIPIKSEDIQGPEDKQIPHMQGNMINLETKKTKL.

The tract at residues 1 to 34 is disordered; the sequence is MNPFQQNESKETLFSPVSTEETPPRLSSPAKKTP. The Cytoplasmic segment spans residues 1–57; that stretch reads MNPFQQNESKETLFSPVSTEETPPRLSSPAKKTPPKICGSNYPLSIAFIVVNEFCER. Serine 9 is subject to Phosphoserine. Threonine 12 carries the post-translational modification Phosphothreonine. Phosphoserine is present on serine 28. The chain crosses the membrane as a helical span at residues 58-78; it reads FSYYGMKAVLTLYFLYFLHWN. Over 79–87 the chain is Extracellular; that stretch reads EDTSTSVYH. The helical transmembrane segment at 88–108 threads the bilayer; it reads AFSSLCYFTPILGAAIADSWL. Topologically, residues 109–113 are cytoplasmic; that stretch reads GKFKT. Residues 114 to 134 form a helical membrane-spanning segment; the sequence is IIYLSLVNVLGHVIKSLSAFP. The Extracellular portion of the chain corresponds to 135 to 139; the sequence is ILGGK. Residues 140 to 160 form a helical membrane-spanning segment; that stretch reads VVHTVLSLVGLCLIALGTGGI. Over 161–183 the chain is Cytoplasmic; that stretch reads KPCVAAFGGDQFEEKHAEERTRY. A helical transmembrane segment spans residues 184–204; the sequence is FSGFYLAINAGSLISTFITPM. Residues 205 to 217 lie on the Extracellular side of the membrane; it reads LRGDVQCFGEDCY. The chain crosses the membrane as a helical span at residues 218-238; the sequence is ALAFGVPGLLMVIALVVFAMG. Residues 239–295 are Cytoplasmic-facing; the sequence is SKMYKKPPPEGNIVAQVVKCIWFAISNRFKNRSEDIPKRQHWLDWAAEKYPKQLIMD. Residues 296 to 316 form a helical membrane-spanning segment; it reads VKTLTRVLFLYIPLPMFWALL. Topologically, residues 317 to 343 are extracellular; it reads DQQGSRWTLQATKMNGNLGFFVLQPDQ. The chain crosses the membrane as a helical span at residues 344 to 364; the sequence is MQVLNPLLVLIFIPLFDLVIY. Residues 365–380 are Cytoplasmic-facing; that stretch reads RLISKCGINFTSLRKM. The chain crosses the membrane as a helical span at residues 381-401; the sequence is AVGMVLACLAFAAAATVEIKI. Residues 402 to 611 lie on the Extracellular side of the membrane; the sequence is NEMAPPQPGS…PANKVSIAWQ (210 aa). The extracellular domain (ECD) stretch occupies residues 402–611; the sequence is NEMAPPQPGS…PANKVSIAWQ (210 aa). N-linked (GlcNAc...) asparagine glycosylation is found at asparagine 435, asparagine 472, asparagine 508, asparagine 528, and asparagine 587. The helical transmembrane segment at 612–632 threads the bilayer; that stretch reads LPQYALVTAGEVMFSVTGLEF. The Cytoplasmic portion of the chain corresponds to 633–643; that stretch reads SYSQAPSSMKS. A helical membrane pass occupies residues 644–664; it reads VLQAAWLLTVAIGNIIVLVVA. Residues 665–674 lie on the Extracellular side of the membrane; sequence QFSGLVQWAE. The chain crosses the membrane as a helical span at residues 675 to 695; it reads FVLFSCLLLVVCLIFSIMGYY. Residues 696–729 are Cytoplasmic-facing; it reads YIPIKSEDIQGPEDKQIPHMQGNMINLETKKTKL.

The protein belongs to the major facilitator superfamily. Proton-dependent oligopeptide transporter (POT/PTR) (TC 2.A.17) family. As to quaternary structure, interacts (via extracellular domain region) with trypsin. Strongly expressed in kidney. Also detected in brain, lung, liver and heart.

It localises to the apical cell membrane. Its subcellular location is the cytoplasmic vesicle. The protein localises to the phagosome membrane. It is found in the cell membrane. The enzyme catalyses a dipeptide(out) + 2 H(+)(out) = a dipeptide(in) + 2 H(+)(in). It carries out the reaction N-acetyl-D-muramoyl-L-alanyl-D-isoglutamine(out) + 3 H(+)(out) = N-acetyl-D-muramoyl-L-alanyl-D-isoglutamine(in) + 3 H(+)(in). The catalysed reaction is glycyl-L-leucine(out) + 2 H(+)(out) = glycyl-L-leucine(in) + 2 H(+)(in). It catalyses the reaction glycyl-L-lysine(out) + 2 H(+)(out) = glycyl-L-lysine(in) + 2 H(+)(in). The enzyme catalyses glycyl-L-glutamate(out) + 3 H(+)(out) = glycyl-L-glutamate(in) + 3 H(+)(in). It carries out the reaction L-alanyl-L-alanine(out) + 2 H(+)(out) = L-alanyl-L-alanine(in) + 2 H(+)(in). The catalysed reaction is an L-amino acid tripeptide(out) + 2 H(+)(out) = an L-amino acid tripeptide(in) + 2 H(+)(in). It catalyses the reaction carnosine(out) + 2 H(+)(out) = carnosine(in) + 2 H(+)(in). Functionally, proton-coupled amino-acid transporter that transports oligopeptides of 2 to 4 amino acids with a preference for dipeptides. Transports neutral and anionic dipeptides with a proton to peptide stoichiometry of 2:1 or 3:1. In kidney, involved in the absorption of circulating di- and tripeptides from the glomerular filtrate. Can also transport beta-lactam antibiotics, such as the aminocephalosporin cefadroxil, and other antiviral and anticancer drugs. Transports the dipeptide-like aminopeptidase inhibitor bestatin. Also able to transport carnosine. Involved in innate immunity by promoting the detection of microbial pathogens by NOD-like receptors (NLRs). Mediates transport of bacterial peptidoglycans across the plasma membrane or, in macrophages, the phagosome membrane: catalyzes the transport of certain bacterial peptidoglycans, such as muramyl dipeptide (MDP), the NOD2 ligand. This Oryctolagus cuniculus (Rabbit) protein is Solute carrier family 15 member 2.